The primary structure comprises 138 residues: 18 kDa antigen 2 (138 aa).

The sHSP domain maps to 21–131 (GTRRPAVMPM…KPRRIEINHN (111 aa)).

It belongs to the small heat shock protein (HSP20) family.

Functionally, not known. This protein is one of the major immune reactive proteins in mycobacteria. The protein is 18 kDa antigen 2 of Mycobacterium avium.